The following is a 594-amino-acid chain: Probable translation initiation factor IF-2 (594 aa).

A tr-type G domain is found at 11–226 (LRTPIVCVMG…LIGLAQRFLE (216 aa)). A G1 region spans residues 20–27 (GHVDHGKT). Residue 20–27 (GHVDHGKT) coordinates GTP. The segment at 45-49 (AITQH) is G2. The G3 stretch occupies residues 81–84 (DTPG). GTP contacts are provided by residues 81-85 (DTPGH) and 135-138 (NKID). Residues 135-138 (NKID) are G4. The G5 stretch occupies residues 203-205 (SAR).

This sequence belongs to the TRAFAC class translation factor GTPase superfamily. Classic translation factor GTPase family. IF-2 subfamily.

In terms of biological role, function in general translation initiation by promoting the binding of the formylmethionine-tRNA to ribosomes. Seems to function along with eIF-2. The sequence is that of Probable translation initiation factor IF-2 from Methanocella arvoryzae (strain DSM 22066 / NBRC 105507 / MRE50).